A 130-amino-acid chain; its full sequence is Small ribosomal subunit protein uS9 (130 aa).

This sequence belongs to the universal ribosomal protein uS9 family.

The sequence is that of Small ribosomal subunit protein uS9 from Saccharophagus degradans (strain 2-40 / ATCC 43961 / DSM 17024).